We begin with the raw amino-acid sequence, 397 residues long: Elongation factor Tu (397 aa).

Positions 10-206 constitute a tr-type G domain; the sequence is KPHVNIGTIG…AVDEYIPTPE (197 aa). The tract at residues 19-26 is G1; that stretch reads GHVDHGKT. 19–26 serves as a coordination point for GTP; the sequence is GHVDHGKT. Residue T26 participates in Mg(2+) binding. Residues 60-64 form a G2 region; sequence GITIS. The segment at 81–84 is G3; the sequence is DCPG. GTP-binding positions include 81-85 and 136-139; these read DCPGH and NKAD. Positions 136–139 are G4; sequence NKAD. The interval 174–176 is G5; sequence SAL.

Belongs to the TRAFAC class translation factor GTPase superfamily. Classic translation factor GTPase family. EF-Tu/EF-1A subfamily. In terms of assembly, monomer.

The protein resides in the cytoplasm. The catalysed reaction is GTP + H2O = GDP + phosphate + H(+). In terms of biological role, GTP hydrolase that promotes the GTP-dependent binding of aminoacyl-tRNA to the A-site of ribosomes during protein biosynthesis. This is Elongation factor Tu from Clostridium tetani (strain Massachusetts / E88).